The following is a 121-amino-acid chain: Mu-hexatoxin-Mg1a (121 aa).

The N-terminal stretch at 1 to 20 (MMTLSPFLLLLIAAVVIGNA) is a signal peptide. Positions 21-80 (SEGEVKNEFEERLKDEFKDPSRSEVAEVILLRELEVLEETLFGKEMTSDTEENRNSREKR) are excised as a propeptide. 3 cysteine pairs are disulfide-bonded: C81-C95, C88-C102, and C94-C116. K120 carries the post-translational modification Lysine amide.

It belongs to the neurotoxin 14 (magi-1) family. 09 (magi-1) subfamily. In terms of tissue distribution, expressed by the venom gland.

The protein localises to the secreted. Its function is as follows. Insecticidal neurotoxin. Shows competition for site 3 of insect voltage-gated sodium channels (Nav). Induces flaccid paralysis when injected into lepidopteran larvae. Is not toxic to mice when injected intracranially at 20 pmol/g. The protein is Mu-hexatoxin-Mg1a of Macrothele gigas (Japanese funnel web spider).